A 1036-amino-acid polypeptide reads, in one-letter code: Protein translocase subunit SecA, chloroplastic (1036 aa).

Residues 1-76 constitute a chloroplast transit peptide; sequence MESCARSASQ…KIGELMQVRA (76 aa). Residue 186–193 participates in ATP binding; it reads MRTGEGKT. A disordered region spans residues 995–1036; it reads NQEQQQKGKPDSSNVENKRIGDANLNPVSVTESPSSDSPQNT. A compositionally biased stretch (basic and acidic residues) spans 1000–1015; that stretch reads QKGKPDSSNVENKRIG. A compositionally biased stretch (polar residues) spans 1020–1036; sequence NPVSVTESPSSDSPQNT.

Belongs to the SecA family.

The protein localises to the plastid. Its subcellular location is the chloroplast stroma. The protein resides in the chloroplast thylakoid membrane. It catalyses the reaction ATP + H2O + chloroplast-proteinSide 1 = ADP + phosphate + chloroplast-proteinSide 2.. Its function is as follows. Has a central role in coupling the hydrolysis of ATP to the transfer of proteins across the thylakoid membrane. This chain is Protein translocase subunit SecA, chloroplastic, found in Spinacia oleracea (Spinach).